Consider the following 82-residue polypeptide: Metallothionein-like protein 2A (82 aa).

This sequence belongs to the metallothionein superfamily. Type 15 family. As to expression, expressed in stems, leaves, rachis, inflorescences and seeds.

Metallothioneins have a high content of cysteine residues that bind various heavy metals. This Oryza sativa subsp. japonica (Rice) protein is Metallothionein-like protein 2A (MT2A).